The chain runs to 239 residues: Fumarate reductase iron-sulfur subunit (239 aa).

The 91-residue stretch at 5–95 (LTIRVFKYDP…DGVITLLPLP (91 aa)) folds into the 2Fe-2S ferredoxin-type domain. The [2Fe-2S] cluster site is built by Cys57, Cys62, Cys65, and Cys77. A 4Fe-4S ferredoxin-type domain is found at 142–171 (AQEVFELDRCIECGCCIAACGTKIMREDFV). [4Fe-4S] cluster is bound by residues Cys151, Cys154, and Cys157. Residues Cys161, Cys208, and Cys214 each coordinate [3Fe-4S] cluster. [4Fe-4S] cluster is bound at residue Cys218.

Belongs to the succinate dehydrogenase/fumarate reductase iron-sulfur protein family. As to quaternary structure, part of an enzyme complex containing three subunits: a flavoprotein (frdA), an iron-sulfur protein (frdB), and diheme cytochrome b (frdC). Requires [2Fe-2S] cluster as cofactor. The cofactor is [3Fe-4S] cluster. [4Fe-4S] cluster is required as a cofactor.

It is found in the cell inner membrane. It catalyses the reaction a menaquinone + succinate = a menaquinol + fumarate. In terms of biological role, the fumarate reductase enzyme complex is required for fumarate respiration using formate or sulfide as electron donor. The polypeptide is Fumarate reductase iron-sulfur subunit (frdB) (Wolinella succinogenes (strain ATCC 29543 / DSM 1740 / CCUG 13145 / JCM 31913 / LMG 7466 / NCTC 11488 / FDC 602W) (Vibrio succinogenes)).